A 395-amino-acid chain; its full sequence is Chalcone synthase (395 aa).

Val-2 carries the N-acetylvaline modification. Cys-169 is a catalytic residue.

Belongs to the thiolase-like superfamily. Chalcone/stilbene synthases family.

The enzyme catalyses (E)-4-coumaroyl-CoA + 3 malonyl-CoA + 3 H(+) = 2',4,4',6'-tetrahydroxychalcone + 3 CO2 + 4 CoA. It participates in secondary metabolite biosynthesis; flavonoid biosynthesis. Its function is as follows. The primary product of this enzyme is 4,2',4',6'-tetrahydroxychalcone (also termed naringenin-chalcone or chalcone) which can under specific conditions spontaneously isomerize into naringenin. The sequence is that of Chalcone synthase (CHS) from Cardamine amara (Large bitter-cress).